Here is a 547-residue protein sequence, read N- to C-terminus: uncharacterized protein (547 aa).

Basic and acidic residues predominate over residues 38–50 (RNLPFHREREKVE). The disordered stretch occupies residues 38–89 (RNLPFHREREKVESNPNSSDEEDLTSTNNTRSSDNTTSDTEDDSGEDSYQVE). Over residues 62 to 75 (TSTNNTRSSDNTTS) the composition is skewed to low complexity. The next 12 membrane-spanning stretches (helical) occupy residues 108–128 (IYTL…SSIF), 148–168 (LCSA…APLS), 174–194 (LPLY…GGCS), 197–217 (IWSL…PMSA), 233–253 (GALL…PVMG), 265–285 (WDFW…CFTM), 346–366 (MYLV…PLIF), 377–397 (GLAI…TPII), 418–438 (LFPL…LGWT), 445–465 (WAAP…VLAV), 478–500 (AASA…TIVA), and 514–534 (SLLA…FFWG).

Belongs to the major facilitator superfamily. CAR1 family.

The protein resides in the membrane. This is an uncharacterized protein from Schizosaccharomyces pombe (strain 972 / ATCC 24843) (Fission yeast).